Consider the following 228-residue polypeptide: Sodium channel regulatory subunit beta-4 (228 aa).

A signal peptide spans 1-30; sequence MSRAGNRGNTQARWLGTGLLGLFLLPMYLS. Positions 31 to 148 constitute an Ig-like C2-type domain; that stretch reads LEVSVGKATT…KDLNNSATIF (118 aa). Residues 31–161 are Extracellular-facing; the sequence is LEVSVGKATT…VDKLEKVDNT (131 aa). Residues Asn45, Asn71, Asn113, and Asn142 are each glycosylated (N-linked (GlcNAc...) asparagine). A disulfide bridge links Cys53 with Cys131. A helical transmembrane segment spans residues 162-182; it reads VTLIILAVVGGVIGLLVCILL. Topologically, residues 183–228 are cytoplasmic; the sequence is LKKLITFILKKTREKKKECLVSSSGNDNTENGLPGSKAEEKPPTKV. Positions 199–228 are disordered; that stretch reads KECLVSSSGNDNTENGLPGSKAEEKPPTKV. The span at 203 to 213 shows a compositional bias: polar residues; sequence VSSSGNDNTEN. Residues 219-228 are compositionally biased toward basic and acidic residues; it reads KAEEKPPTKV.

It belongs to the sodium channel auxiliary subunit SCN4B (TC 8.A.17) family. In terms of assembly, a voltage-gated sodium (Nav) channel consists of an ion-conducting pore-forming alpha subunit functional on its own that is regulated by one or more beta subunits. The beta subunit SCN4B is disulfide-linked to the pore-forming alpha subunit. Interacts with SCN1A; regulatory subunit of SCN1A/Nav1.1. Interacts with SCN2A; regulatory subunit of SCN2A/Nav1.2. Contains an interchain disulfide bond with SCN2A.

Its subcellular location is the cell membrane. Functionally, regulatory subunit of multiple voltage-gated sodium (Nav) channels directly mediating the depolarization of excitable membranes. Navs, also called VGSCs (voltage-gated sodium channels) or VDSCs (voltage-dependent sodium channels), operate by switching between closed and open conformations depending on the voltage difference across the membrane. In the open conformation they allow Na(+) ions to selectively pass through the pore, along their electrochemical gradient. The influx of Na+ ions provokes membrane depolarization, initiating the propagation of electrical signals throughout cells and tissues. The accessory beta subunits participate in localization and functional modulation of the Nav channels. Modulates the activity of SCN1A/Nav1.1. Modulates the activity of SCN2A/Nav1.2. This Mus musculus (Mouse) protein is Sodium channel regulatory subunit beta-4.